Consider the following 611-residue polypeptide: UvrABC system protein C (611 aa).

In terms of domain architecture, GIY-YIG spans Thr-14–Ile-91. The 36-residue stretch at Asp-196–Leu-231 folds into the UVR domain.

This sequence belongs to the UvrC family. Interacts with UvrB in an incision complex.

The protein resides in the cytoplasm. Functionally, the UvrABC repair system catalyzes the recognition and processing of DNA lesions. UvrC both incises the 5' and 3' sides of the lesion. The N-terminal half is responsible for the 3' incision and the C-terminal half is responsible for the 5' incision. The protein is UvrABC system protein C of Streptococcus gordonii (strain Challis / ATCC 35105 / BCRC 15272 / CH1 / DL1 / V288).